The primary structure comprises 316 residues: 4-hydroxy-3-methylbut-2-enyl diphosphate reductase (316 aa).

A [4Fe-4S] cluster-binding site is contributed by Cys-12. Residues His-41 and His-74 each coordinate (2E)-4-hydroxy-3-methylbut-2-enyl diphosphate. Residues His-41 and His-74 each contribute to the dimethylallyl diphosphate site. Isopentenyl diphosphate contacts are provided by His-41 and His-74. Cys-96 serves as a coordination point for [4Fe-4S] cluster. Residue His-124 coordinates (2E)-4-hydroxy-3-methylbut-2-enyl diphosphate. His-124 contributes to the dimethylallyl diphosphate binding site. Residue His-124 participates in isopentenyl diphosphate binding. Glu-126 serves as the catalytic Proton donor. (2E)-4-hydroxy-3-methylbut-2-enyl diphosphate is bound at residue Thr-168. Position 198 (Cys-198) interacts with [4Fe-4S] cluster. (2E)-4-hydroxy-3-methylbut-2-enyl diphosphate-binding residues include Ser-226, Ser-227, Asn-228, and Ser-270. Dimethylallyl diphosphate is bound by residues Ser-226, Ser-227, Asn-228, and Ser-270. Residues Ser-226, Ser-227, Asn-228, and Ser-270 each coordinate isopentenyl diphosphate.

This sequence belongs to the IspH family. Requires [4Fe-4S] cluster as cofactor.

It carries out the reaction isopentenyl diphosphate + 2 oxidized [2Fe-2S]-[ferredoxin] + H2O = (2E)-4-hydroxy-3-methylbut-2-enyl diphosphate + 2 reduced [2Fe-2S]-[ferredoxin] + 2 H(+). The enzyme catalyses dimethylallyl diphosphate + 2 oxidized [2Fe-2S]-[ferredoxin] + H2O = (2E)-4-hydroxy-3-methylbut-2-enyl diphosphate + 2 reduced [2Fe-2S]-[ferredoxin] + 2 H(+). The protein operates within isoprenoid biosynthesis; dimethylallyl diphosphate biosynthesis; dimethylallyl diphosphate from (2E)-4-hydroxy-3-methylbutenyl diphosphate: step 1/1. Its pathway is isoprenoid biosynthesis; isopentenyl diphosphate biosynthesis via DXP pathway; isopentenyl diphosphate from 1-deoxy-D-xylulose 5-phosphate: step 6/6. Functionally, catalyzes the conversion of 1-hydroxy-2-methyl-2-(E)-butenyl 4-diphosphate (HMBPP) into a mixture of isopentenyl diphosphate (IPP) and dimethylallyl diphosphate (DMAPP). Acts in the terminal step of the DOXP/MEP pathway for isoprenoid precursor biosynthesis. The polypeptide is 4-hydroxy-3-methylbut-2-enyl diphosphate reductase (Acinetobacter baylyi (strain ATCC 33305 / BD413 / ADP1)).